Consider the following 589-residue polypeptide: Sentrin-specific protease 2 (589 aa).

A Nuclear localization signal motif is present at residues 28 to 31 (KRRR). The residue at position 32 (Ser-32) is a Phosphoserine. Positions 46 to 51 (PAKRPR) match the Nuclear localization signal motif. Residues 71–382 (GFPFQLTTKP…EKEISNALGH (312 aa)) are axin-binding. Disordered stretches follow at residues 148-179 (SFGF…LMWK) and 191-210 (EESG…GVQK). The Nuclear export signal signature appears at 317–332 (LEPDLSEEVSARLRLG). Ser-333 and Ser-344 each carry phosphoserine. The interval 395-559 (LRITRGDIQT…MFTCKYADYI (165 aa)) is protease. Residues His-478 and Asp-495 contribute to the active site. Catalysis depends on Cys-548, which acts as the Nucleophile.

Belongs to the peptidase C48 family. In terms of assembly, binds to SUMO2 and SUMO3. Interacts with the C-terminal domain of NUP153 via its N-terminus. Interacts with MTA1. Post-translationally, polyubiquitinated; which leads to proteasomal degradation.

It is found in the nucleus. The protein resides in the nuclear pore complex. Its subcellular location is the nucleus membrane. The protein localises to the cytoplasm. Functionally, protease that catalyzes two essential functions in the SUMO pathway. The first is the hydrolysis of an alpha-linked peptide bond at the C-terminal end of the small ubiquitin-like modifier (SUMO) propeptides, SUMO1, SUMO2 and SUMO3 leading to the mature form of the proteins. The second is the deconjugation of SUMO1, SUMO2 and SUMO3 from targeted proteins, by cleaving an epsilon-linked peptide bond between the C-terminal glycine of the mature SUMO and the lysine epsilon-amino group of the target protein. May down-regulate CTNNB1 levels and thereby modulate the Wnt pathway. Deconjugates SUMO2 from MTA1. Plays a dynamic role in adipogenesis by desumoylating and promoting the stabilization of CEBPB. Acts as a regulator of the cGAS-STING pathway by catalyzing desumoylation of CGAS and STING1 during the late phase of viral infection. The chain is Sentrin-specific protease 2 (SENP2) from Pongo abelii (Sumatran orangutan).